A 429-amino-acid polypeptide reads, in one-letter code: 3-oxo-tetronate kinase (429 aa).

ATP is bound by residues serine 268, 366–369, and glycine 410; that span reads GGET.

It belongs to the four-carbon acid sugar kinase family.

It carries out the reaction 3-dehydro-L-erythronate + ATP = 3-dehydro-4-O-phospho-L-erythronate + ADP + H(+). The enzyme catalyses 3-dehydro-D-erythronate + ATP = 3-dehydro-4-O-phospho-D-erythronate + ADP + H(+). In terms of biological role, catalyzes the ATP-dependent phosphorylation of 3-oxo-tetronate to 3-oxo-tetronate 4-phosphate. This chain is 3-oxo-tetronate kinase, found in Pseudomonas savastanoi pv. phaseolicola (strain 1448A / Race 6) (Pseudomonas syringae pv. phaseolicola (strain 1448A / Race 6)).